Consider the following 494-residue polypeptide: AAA-ATPase At2g18190 (494 aa).

Residues 13-29 (SSLFTAYASLTGFLMLF) form a helical membrane-spanning segment. 251 to 258 (GPPGTGKS) provides a ligand contact to ATP. Basic and acidic residues predominate over residues 459 to 470 (TCRKLDGDDKHN). The segment at 459–494 (TCRKLDGDDKHNVSSTNDLKKTKKKKKGGKGKAKGN) is disordered. Over residues 479-494 (KTKKKKKGGKGKAKGN) the composition is skewed to basic residues.

This sequence belongs to the AAA ATPase family. BCS1 subfamily. The cofactor is Mg(2+).

The protein resides in the membrane. It carries out the reaction ATP + H2O = ADP + phosphate + H(+). The sequence is that of AAA-ATPase At2g18190 from Arabidopsis thaliana (Mouse-ear cress).